The sequence spans 116 residues: MEFGLSWVFLVAILKGVQCEVQLVESGGGLIQPGGSLRLSCAASGFTVSSNYMSWVRQAPGKGLEWVSVIYSCGSTYYADSVKGRFTISRDNSKNTLYLQMNSLRAEDTAVYYCAR.

A signal peptide spans 1 to 19 (MEFGLSWVFLVAILKGVQC). The tract at residues 20–44 (EVQLVESGGGLIQPGGSLRLSCAAS) is framework-1. Residues 20–116 (EVQLVESGGG…EDTAVYYCAR (97 aa)) form the Ig-like domain. A disulfide bridge links Cys41 with Cys114. Positions 45 to 52 (GFTVSSNY) are complementarity-determining-1. The segment at 53 to 69 (MSWVRQAPGKGLEWVSV) is framework-2. A complementarity-determining-2 region spans residues 70–76 (IYSCGST). The segment at 77–114 (YYADSVKGRFTISRDNSKNTLYLQMNSLRAEDTAVYYC) is framework-3. The interval 115 to 116 (AR) is complementarity-determining-3.

As to quaternary structure, immunoglobulins are composed of two identical heavy chains and two identical light chains; disulfide-linked.

It is found in the secreted. Its subcellular location is the cell membrane. V region of the variable domain of immunoglobulin heavy chains that participates in the antigen recognition. Immunoglobulins, also known as antibodies, are membrane-bound or secreted glycoproteins produced by B lymphocytes. In the recognition phase of humoral immunity, the membrane-bound immunoglobulins serve as receptors which, upon binding of a specific antigen, trigger the clonal expansion and differentiation of B lymphocytes into immunoglobulins-secreting plasma cells. Secreted immunoglobulins mediate the effector phase of humoral immunity, which results in the elimination of bound antigens. The antigen binding site is formed by the variable domain of one heavy chain, together with that of its associated light chain. Thus, each immunoglobulin has two antigen binding sites with remarkable affinity for a particular antigen. The variable domains are assembled by a process called V-(D)-J rearrangement and can then be subjected to somatic hypermutations which, after exposure to antigen and selection, allow affinity maturation for a particular antigen. The sequence is that of Immunoglobulin heavy variable 3-66 from Homo sapiens (Human).